Reading from the N-terminus, the 86-residue chain is DSEFPCPRKQQPAGNSECSYYCEMNGQWKLGKFQNGARCDYNAVKDGVCNEGLCYASGDSASNTQNQGGSRRQENEDQGDDEWDRK.

3 cysteine pairs are disulfide-bonded: Cys6-Cys22, Cys18-Cys49, and Cys39-Cys54. The tract at residues 58-86 (GDSASNTQNQGGSRRQENEDQGDDEWDRK) is disordered. Residues 59 to 70 (DSASNTQNQGGS) show a composition bias toward polar residues. A compositionally biased stretch (acidic residues) spans 76-86 (EDQGDDEWDRK).

Salivary gland (at protein level).

It localises to the secreted. Its function is as follows. Inhibits lectin and classical pathways of complement system activation in the host with no significant effect on the alternative pathway. Inhibits host extrinsic blood coagulation pathway but not the intrinsic cascade. Binds to neutral and negatively charged membranes in vitro; binding is reduced upon pre-incubation with Ca(2+). The protein is BaSO(4)-adsorbing protein 1 of Ornithodoros savignyi (African eyed tampan).